The chain runs to 281 residues: MSNHSEILERPETPYDITYRVGVAENKNSKFRRTMEDVHTYVKNFASRLDWGYFAVFDGHAGIQASKWCGKHLHTIIEQNILADETRDVRDVLNDSFLAIDEEINTKLVGNSGCTAAVCVLRWELPDSVSDDSMDLAQHQRKLYTANVGDSRIVLFRNGNSIRLTYDHKASDTLEMQRVEQAGGLIMKSRVNGMLAVTRSLGDKFFDSLVVGSPFTTSVEITSEDKFLILACDGLWDVIDDQDACELIKDITEPNEAAKVLVRYALENGTTDNVTVMVVFL.

One can recognise a PPM-type phosphatase domain in the interval 20–281; sequence RVGVAENKNS…DNVTVMVVFL (262 aa). Positions 58, 59, 233, and 272 each coordinate Mn(2+).

This sequence belongs to the PP2C family. As to quaternary structure, interacts with NBP2 and PBS2. The cofactor is Mg(2+). Requires Mn(2+) as cofactor.

The protein resides in the peroxisome. The enzyme catalyses O-phospho-L-seryl-[protein] + H2O = L-seryl-[protein] + phosphate. It catalyses the reaction O-phospho-L-threonyl-[protein] + H2O = L-threonyl-[protein] + phosphate. In terms of biological role, serine and threonine phosphatase. Involved in tRNA splicing and cell separation. This chain is Protein phosphatase 2C homolog 1 (PTC1), found in Saccharomyces cerevisiae (strain ATCC 204508 / S288c) (Baker's yeast).